A 308-amino-acid polypeptide reads, in one-letter code: MFFMSTVTVTVPATTANIGPGFDCIGAALTLYNQFTFTEQPEADTDLRITVTGTEAHRVSGDRTNLLYQAFTHLYDHLNKTPPKIAIDIKLGVPLARGLGSSATAIIGGLVGANELAGQPLSTAEIMELAIAIEGHPDNVVPALLGNCQLSVGEAENWEICQIPWHSDIIPVVAIPDFELSTEEARAVLPKTLSYGDAIFNIARMGLLIRALESGNEQWLNKAMADKLHQPYRQGLIEGYEFVQASALKAGAYGMVISGAGPTLLALTHPEKIQSVEKAMKNAWTQLEIVADVRSLSIDTQGANVNAH.

94 to 104 (PLARGLGSSAT) contributes to the ATP binding site.

This sequence belongs to the GHMP kinase family. Homoserine kinase subfamily.

The protein localises to the cytoplasm. The enzyme catalyses L-homoserine + ATP = O-phospho-L-homoserine + ADP + H(+). It participates in amino-acid biosynthesis; L-threonine biosynthesis; L-threonine from L-aspartate: step 4/5. In terms of biological role, catalyzes the ATP-dependent phosphorylation of L-homoserine to L-homoserine phosphate. The sequence is that of Homoserine kinase from Crocosphaera subtropica (strain ATCC 51142 / BH68) (Cyanothece sp. (strain ATCC 51142)).